A 334-amino-acid chain; its full sequence is Ornithine carbamoyltransferase (334 aa).

Carbamoyl phosphate is bound by residues 57–60, Gln84, Arg108, and 135–138; these read STRT and HPTQ. L-ornithine contacts are provided by residues Asn169, Asp233, and 237–238; that span reads SM. Residues 275–276 and Arg320 contribute to the carbamoyl phosphate site; that span reads CL.

The protein belongs to the aspartate/ornithine carbamoyltransferase superfamily. OTCase family.

The protein resides in the cytoplasm. The enzyme catalyses carbamoyl phosphate + L-ornithine = L-citrulline + phosphate + H(+). It functions in the pathway amino-acid biosynthesis; L-arginine biosynthesis; L-arginine from L-ornithine and carbamoyl phosphate: step 1/3. Functionally, reversibly catalyzes the transfer of the carbamoyl group from carbamoyl phosphate (CP) to the N(epsilon) atom of ornithine (ORN) to produce L-citrulline. This is Ornithine carbamoyltransferase from Vibrio campbellii (strain ATCC BAA-1116).